The sequence spans 239 residues: Ribonuclease PH (239 aa).

Phosphate-binding positions include arginine 86 and 124–126 (GTR).

This sequence belongs to the RNase PH family. In terms of assembly, homohexameric ring arranged as a trimer of dimers.

The catalysed reaction is tRNA(n+1) + phosphate = tRNA(n) + a ribonucleoside 5'-diphosphate. Its function is as follows. Phosphorolytic 3'-5' exoribonuclease that plays an important role in tRNA 3'-end maturation. Removes nucleotide residues following the 3'-CCA terminus of tRNAs; can also add nucleotides to the ends of RNA molecules by using nucleoside diphosphates as substrates, but this may not be physiologically important. Probably plays a role in initiation of 16S rRNA degradation (leading to ribosome degradation) during starvation. The chain is Ribonuclease PH from Azoarcus sp. (strain BH72).